The chain runs to 236 residues: Truncated formate dehydrogenase 2 (236 aa).

Residues 36–37, Asp57, 104–108, Thr130, Asp156, and 185–188 contribute to the NAD(+) site; these read RI, PLHKD, and HISG.

The protein belongs to the D-isomer specific 2-hydroxyacid dehydrogenase family. FDH subfamily.

This Saccharomyces cerevisiae (strain ATCC 204508 / S288c) (Baker's yeast) protein is Truncated formate dehydrogenase 2.